A 999-amino-acid chain; its full sequence is Protein Smaug (999 aa).

Over residues 1–36 (MKYATGTDNAMTSGISGQTNNSNSASNEMQPTTSTP) the composition is skewed to polar residues. 2 disordered regions span residues 1 to 69 (MKYA…QSQP) and 329 to 349 (LCPA…IAPP). Low complexity-rich tracts occupy residues 44-69 (TSTA…QSQP) and 329-338 (LCPASGSRSS). A phosphoserine mark is found at serine 564 and serine 575. Residues 583–763 (EFKPNYIKFH…KDLKFKLSKM (181 aa)) form an interaction with cup region. One can recognise an SAM domain in the interval 600-654 (GIGLWLKSLRLHKYIELFKNMTYEEMLLITEDFLQSVGVTKGASHKLALCIDKLK). Disordered stretches follow at residues 773 to 892 (HVKP…MQQM) and 955 to 977 (QQSQ…EQQP). 2 stretches are compositionally biased toward polar residues: residues 801-822 (KNGS…NFSL) and 854-864 (HQPQYKSSSYP). A Phosphoserine modification is found at serine 972.

Belongs to the SMAUG family. As to quaternary structure, interacts with oskar (osk). Binds to the 3'-UTR of nanos (nos). Interacts with cup, which in turn recruits eIF4-E, leading to an indirect interaction between smg and eIF4-E that prevents mRNA translation. Forms a complex with aub, twin, AGO3, nanos mRNA and piRNAs that targets the nanos 3'-untranslated region, in early embryos. In terms of tissue distribution, at syncytial blastoderm, it is located throughout the bulk cytoplasm and pole plasm. By the time of cellularization, it concentrates at the posterior pole.

The protein localises to the cytoplasm. Its function is as follows. Translation regulator that binds to the 3'-UTR of specific mRNAs such as nanos (nos) and prevents their translation. Prevents translation of unlocalized nanos in the bulk cytoplasm via the recruitment of cup. This Drosophila melanogaster (Fruit fly) protein is Protein Smaug (smg).